A 487-amino-acid polypeptide reads, in one-letter code: Serine/threonine-protein phosphatase 2A activator 1 (487 aa).

Disordered regions lie at residues 1–28 (MPMI…SSST) and 426–487 (GGIQ…PKPE).

The protein belongs to the PTPA-type PPIase family.

The protein localises to the cytoplasm. Its subcellular location is the nucleus. The enzyme catalyses [protein]-peptidylproline (omega=180) = [protein]-peptidylproline (omega=0). Its function is as follows. PPIases accelerate the folding of proteins. It catalyzes the cis-trans isomerization of proline imidic peptide bonds in oligopeptides. Acts as a regulatory subunit for PP2A-like phosphatases modulating their activity or substrate specificity, probably by inducing a conformational change in the catalytic subunit, a direct target of the PPIase. Can reactivate inactive phosphatase PP2A-phosphatase methylesterase complexes (PP2Ai) in presence of ATP and Mg(2+) by dissociating the inactive form from the complex. The chain is Serine/threonine-protein phosphatase 2A activator 1 (RRD1) from Mycosarcoma maydis (Corn smut fungus).